The primary structure comprises 78 residues: Large ribosomal subunit protein bL28 (78 aa).

The interval 1 to 28 (MSAICQVTGRQPGYGKSVSHSHRRTSRR) is disordered.

The protein belongs to the bacterial ribosomal protein bL28 family.

The polypeptide is Large ribosomal subunit protein bL28 (Corynebacterium diphtheriae (strain ATCC 700971 / NCTC 13129 / Biotype gravis)).